The sequence spans 129 residues: Small ribosomal subunit protein uS8my (129 aa).

This sequence belongs to the universal ribosomal protein uS8 family. Component of the mitochondrial ribosome small subunit.

The protein resides in the mitochondrion. In Arabidopsis thaliana (Mouse-ear cress), this protein is Small ribosomal subunit protein uS8my (RPS15AE).